The primary structure comprises 511 residues: Aprataxin and PNK-like factor (511 aa).

The FHA-like domain maps to 1-108; the sequence is MSGGFELQPR…RILSIPSEVE (108 aa). S116 is subject to Phosphoserine; by ATM. Phosphoserine is present on S149. The short motif at 182-191 is the KBM element; it reads RKRILPTWML. A disordered region spans residues 223–370; sequence KSQLNTTQQG…ATDSVLQGSE (148 aa). 2 stretches are compositionally biased toward polar residues: residues 225–249 and 263–293; these read QLNT…SAEQ and STIS…NAQR. Basic residues predominate over residues 304–315; it reads VSKHKIATKRTP. Positions 324–344 are enriched in polar residues; sequence CSENCSSAQGDSLQDESQGSH. A compositionally biased stretch (low complexity) spans 345–355; it reads SESSSNPSNPE. A glycoprotein-binding residues include R376, Y381, Y386, and R387. A PBZ-type 1 zinc finger spans residues 377-398; that stretch reads TSCMYGANCYRKNPVHFQHFSH. Positions 406-416 are flexible linker; sequence GVQIVGQDETD. A PBZ-type 2 zinc finger spans residues 419 to 440; the sequence is PECPYGPSCYRKNPQHKIEYRH. Y423, Y428, and R429 together coordinate a glycoprotein. Positions 449-497 are disordered; it reads LDEDNDNVGQPNEYDLNDSFLDDEEEDYEPTDEDSDWEPGKEDEEKEDV. Over residues 468–497 the composition is skewed to acidic residues; the sequence is FLDDEEEDYEPTDEDSDWEPGKEDEEKEDV. The NAP1L motif motif lies at 476-500; it reads YEPTDEDSDWEPGKEDEEKEDVEEL. Residues 487 to 511 adopt a coiled-coil conformation; sequence PGKEDEEKEDVEELLKEAKRFMKRK.

The protein belongs to the APLF family. In terms of assembly, interacts with LIG4. Interacts with PARP1. Interacts with XRCC4. Interacts (via KBM motif) with XRCC5 and XRCC6; promoting recruitment to DNA damage sites. Interacts with XRCC1. Interacts (via C-terminal disordered region) with histones; interacts with histone H2A, H2B and H3-H4. Post-translationally, poly-ADP-ribosylated. In addition to binding non covalently poly-ADP-ribose via its PBZ-type zinc fingers, the protein is also covalently poly-ADP-ribosylated by PARP1. Phosphorylated in an ATM-dependent manner upon double-strand DNA break.

Its subcellular location is the nucleus. It is found in the chromosome. It localises to the cytoplasm. The protein localises to the cytosol. Functionally, histone chaperone involved in single-strand and double-strand DNA break repair. Recruited to sites of DNA damage through interaction with branched poly-ADP-ribose chains, a polymeric post-translational modification synthesized transiently at sites of chromosomal damage to accelerate DNA strand break repair reactions. Following recruitment to DNA damage sites, acts as a histone chaperone that mediates histone eviction during DNA repair and promotes recruitment of histone variant MACROH2A1. Also has a nuclease activity: displays apurinic-apyrimidinic (AP) endonuclease and 3'-5' exonuclease activities in vitro. Also able to introduce nicks at hydroxyuracil and other types of pyrimidine base damage. Together with PARP3, promotes the retention of the LIG4-XRCC4 complex on chromatin and accelerate DNA ligation during non-homologous end-joining (NHEJ). Also acts as a negative regulator of cell pluripotency by promoting histone exchange. Required for the embryo implantation during the epithelial to mesenchymal transition in females. The polypeptide is Aprataxin and PNK-like factor (Homo sapiens (Human)).